The following is an 814-amino-acid chain: Glycosyltransferase GlyD (814 aa).

The interval 1 to 264 is GT8 domain; sequence MNKTIVLAGD…SQILQHHMGE (264 aa). UDP is bound by residues 8–13 and 102–103; these read AGDRNY and DS. Asp102, Asp104, and His226 together coordinate Mn(2+). A UDP-binding site is contributed by 226 to 232; that stretch reads HFTTYRK. Residues 542–814 are GT-D domain; that stretch reads EKPLDIIQVK…NSQIVARILN (273 aa).

The protein in the N-terminal section; belongs to the glycosyltransferase 8 family. This sequence in the C-terminal section; belongs to the GT-D family.

It participates in protein modification; protein glycosylation. Involved in the polymorphic O-glycosylation of the serine-rich repeat protein PsrP. Catalyzes the third step in glycosylation PsrP in this bacteria. Transfers glucose from UDP-glucose to the terminal glucose moiety of already-glycosylated PsrP (using truncated substrates with PsrP SSR1-GlcNAc-Glc); the C-terminal GT-D domain is sufficient for this reaction in vitro. Also transfers galactose from UDP-galactose to the terminal glucose moiety of already-glycosylated PsrP; the C-terminal GT-D domain is also sufficient for this reaction in vitro. Activity is much higher with UDP-glucose, and the enzyme has a very marked preference for PsrP substrate that has already been modified by GlcNAc and glucose. In vitro has hydrolytic activity against UDP-galactose and to a lesser extent against UDP-glucose. Its function is as follows. Also catalyzes the fourth step in glycosylation of PsrP in this bacteria. Can transfer the sugar from both UDP-glucose and UDP-galactose to the terminal sugar moiety of PsrP-GlcNAc-Glc-Glc and PsrP-GlcNAc-Glc-Gal; the C-terminal GT-D domain is also sufficient for this reaction in vitro (using truncated substrates with glycosylated PsrP SSR1). The N-terminal GT-D domain can transfer galactose from UDP-galactose to PsrP-GlcNAc-Glc-Gal or PsrP-GlcNAc-Glc-Glc in the fourth step. In Streptococcus pneumoniae serotype 4 (strain ATCC BAA-334 / TIGR4), this protein is Glycosyltransferase GlyD.